A 172-amino-acid chain; its full sequence is Zinc finger protein 580 (172 aa).

A disordered region spans residues 1 to 93; it reads MLLLPPRPPH…GEPGPRKGYS (93 aa). The span at 19–30 shows a compositional bias: pro residues; sequence MDPPPPKAPPFP. Residue lysine 31 forms a Glycyl lysine isopeptide (Lys-Gly) (interchain with G-Cter in SUMO2) linkage. Residues 31-44 show a composition bias toward low complexity; sequence KAEGPSSTPSSAAG. Pro residues predominate over residues 75–86; that stretch reads GPPQREAPPGEP. The C2H2-type 1 zinc finger occupies 92–114; sequence YSCPECARVFASPLRLQSHRVSH. A Glycyl lysine isopeptide (Lys-Gly) (interchain with G-Cter in SUMO2) cross-link involves residue lysine 118. 2 C2H2-type zinc fingers span residues 120–142 and 150–172; these read FTCGACGKAFKRSSHLSRHRATH and HTCPLCPRRFQDAAELAQHVRLH.

In terms of assembly, interacts with SMAD2. As to expression, expressed in endothelial cells.

The protein localises to the nucleus. Its function is as follows. Involved in the regulation of endothelial cell proliferation and migration. Mediates H(2)O(2)-induced leukocyte chemotaxis by elevating interleukin-8 production and may play a role in inflammation. May be involved in transcriptional regulation. This is Zinc finger protein 580 (ZNF580) from Homo sapiens (Human).